The primary structure comprises 212 residues: ER lumen protein-retaining receptor 2 (212 aa).

Residues 1–4 (MNIF) lie on the Lumenal side of the membrane. Residues 5–24 (RLTGDLSHLAAIIILLLKIW) form a helical membrane-spanning segment. Residues 25 to 32 (KSRSCAGI) are Cytoplasmic-facing. The chain crosses the membrane as a helical span at residues 33–52 (SGKSQILFALVFTTRYLDLL). Positions 47–48 (RY) are interaction with the K-D-E-L motif on target proteins. At 53-58 (TSFISL) the chain is on the lumenal side. A helical transmembrane segment spans residues 59–79 (YNTCMKVIYIGCAYATVYLIY). Residues 80–92 (AKFRATYDGNHDT) lie on the Cytoplasmic side of the membrane. The chain crosses the membrane as a helical span at residues 93-110 (FRAEFLVVPVGGLAFLVN). Over 111-116 (HDFSPL) the chain is Lumenal. Residues 117–135 (EILWTFSIYLESVAILPQL) form a helical membrane-spanning segment. Over 136-149 (FMISKTGEAETITT) the chain is Cytoplasmic. A helical membrane pass occupies residues 150 to 168 (HYLFCLGVYRALYLFNWIW). The segment at 159 to 169 (RALYLFNWIWR) is interaction with the K-D-E-L motif on target proteins. The Lumenal segment spans residues 169-178 (RFYFEGFFDM). The helical transmembrane segment at 179-199 (IAIVAGVVQTILYCDFFYLYV) threads the bilayer. Residues 200–212 (TKVLKGKKLSLPA) are Cytoplasmic-facing. The interval 204–207 (KGKK) is important for recycling of cargo proteins with the sequence motif K-D-E-L from the Golgi to the endoplasmic reticulum.

It belongs to the ERD2 family.

The protein resides in the endoplasmic reticulum membrane. It localises to the golgi apparatus membrane. The protein localises to the cytoplasmic vesicle. It is found in the COPI-coated vesicle membrane. In terms of biological role, receptor for the C-terminal sequence motif K-D-E-L that is present on endoplasmic reticulum resident proteins and that mediates their recycling from the Golgi back to the endoplasmic reticulum. Binding is pH dependent, and is optimal at pH 5-5.4. This chain is ER lumen protein-retaining receptor 2 (kdelr2), found in Danio rerio (Zebrafish).